The following is a 98-amino-acid chain: MLSINLNLIVAFLLALMGVLIYRSHLMSTLLCLEGMMLSLFILMTLLITHFHMFSMSMTPLILLVFSACEAAIGLALLVKISATHGSDHIQNLNLLQC.

3 helical membrane passes run 1 to 21, 29 to 49, and 59 to 79; these read MLSINLNLIVAFLLALMGVLI, TLLCLEGMMLSLFILMTLLIT, and TPLILLVFSACEAAIGLALLV.

Belongs to the complex I subunit 4L family. In terms of assembly, core subunit of respiratory chain NADH dehydrogenase (Complex I) which is composed of 45 different subunits.

Its subcellular location is the mitochondrion inner membrane. It catalyses the reaction a ubiquinone + NADH + 5 H(+)(in) = a ubiquinol + NAD(+) + 4 H(+)(out). Its function is as follows. Core subunit of the mitochondrial membrane respiratory chain NADH dehydrogenase (Complex I) which catalyzes electron transfer from NADH through the respiratory chain, using ubiquinone as an electron acceptor. Part of the enzyme membrane arm which is embedded in the lipid bilayer and involved in proton translocation. The sequence is that of NADH-ubiquinone oxidoreductase chain 4L (MT-ND4L) from Sminthopsis crassicaudata (Fat-tailed dunnart).